Consider the following 441-residue polypeptide: UPF0761 membrane protein RSc1559 (441 aa).

Helical transmembrane passes span 44 to 64 (VLSLVPILTVAFALFTAFPMF), 101 to 121 (GLTAAGLVGLVVTSVMTMLTV), 141 to 161 (VLVFWALVSFGPVLIGASLSV), 182 to 202 (VVVGLVPILLSAIAFAMLYVF), 207 to 227 (LVAWRDAFLAGLVAAVAFEIA), and 248 to 268 (FAALPIFLLWIYVSWLVTLLG).

The protein belongs to the UPF0761 family.

It is found in the cell inner membrane. This chain is UPF0761 membrane protein RSc1559, found in Ralstonia nicotianae (strain ATCC BAA-1114 / GMI1000) (Ralstonia solanacearum).